A 33-amino-acid chain; its full sequence is Large ribosomal subunit protein eL21 (33 aa).

It belongs to the eukaryotic ribosomal protein eL21 family. As to quaternary structure, component of the large ribosomal subunit.

It localises to the cytoplasm. It is found in the cytosol. The protein localises to the endoplasmic reticulum. Component of the large ribosomal subunit. The ribosome is a large ribonucleoprotein complex responsible for the synthesis of proteins in the cell. The chain is Large ribosomal subunit protein eL21 (rpl21) from Xenopus laevis (African clawed frog).